The following is a 96-amino-acid chain: Large ribosomal subunit protein eL14 (96 aa).

It belongs to the eukaryotic ribosomal protein eL14 family.

This chain is Large ribosomal subunit protein eL14, found in Saccharolobus solfataricus (strain ATCC 35092 / DSM 1617 / JCM 11322 / P2) (Sulfolobus solfataricus).